The following is a 301-amino-acid chain: Ribonuclease Z (301 aa).

7 residues coordinate Zn(2+): His-60, His-62, Asp-64, His-65, His-137, Asp-207, and His-265. Asp-64 acts as the Proton acceptor in catalysis.

This sequence belongs to the RNase Z family. Homodimer. Zn(2+) is required as a cofactor.

It carries out the reaction Endonucleolytic cleavage of RNA, removing extra 3' nucleotides from tRNA precursor, generating 3' termini of tRNAs. A 3'-hydroxy group is left at the tRNA terminus and a 5'-phosphoryl group is left at the trailer molecule.. Zinc phosphodiesterase, which displays some tRNA 3'-processing endonuclease activity. Probably involved in tRNA maturation, by removing a 3'-trailer from precursor tRNA. The protein is Ribonuclease Z of Exiguobacterium sp. (strain ATCC BAA-1283 / AT1b).